The chain runs to 475 residues: Ankyrin repeat, SAM and basic leucine zipper domain-containing protein 1 (475 aa).

The segment at 1–25 (MAAGPLRGLAVAGGGESSDSEDDGW) is disordered. Phosphoserine is present on residues Ser-17, Ser-18, and Ser-20. ANK repeat units lie at residues 45-74 (ERQETFKKALTTGNISLVEELLDSGISVDT), 78-107 (YGWTSLMYAASVSNVELVRVLLDRGANASF), 110-144 (DKQTVLITACSARGSEEKILKCIELLLSRNADPNV), 148-177 (RLMTPIMYAARDGHPQVVALLVAHGAEVNT), 181-210 (NGYTALTWAARQGHKNVVLKLLELGANKMI), and 214-243 (DGKTPSEIAKRNKHLEIFNFLSLTLNPLEG). One can recognise an SAM domain in the interval 272 to 334 (SYTAFGDLEI…KIMAALKELE (63 aa)).

As to quaternary structure, interacts with DDX4, PIWIL1, RANBP9 and TDRD1.

The protein resides in the cytoplasm. Functionally, plays a central role during spermatogenesis by repressing transposable elements and preventing their mobilization, which is essential for the germline integrity. Acts via the piRNA metabolic process, which mediates the repression of transposable elements during meiosis by forming complexes composed of piRNAs and Piwi proteins and governs the methylation and subsequent repression of transposons. Its association with pi-bodies suggests a participation in the primary piRNAs metabolic process. Required prior to the pachytene stage to facilitate the production of multiple types of piRNAs, including those associated with repeats involved in the regulation of retrotransposons. May act by mediating protein-protein interactions during germ cell maturation. This chain is Ankyrin repeat, SAM and basic leucine zipper domain-containing protein 1 (ASZ1), found in Bos taurus (Bovine).